The chain runs to 779 residues: GATOR2 complex protein WDR24 (779 aa).

WD repeat units follow at residues 66-106 (SLNF…RNKQ), 112-152 (EHKR…SVST), 155-195 (GQSE…RYER), 199-239 (AHTG…VKEI), 243-285 (QTFA…IPFA), and 289-332 (EHKD…VDRA). Disordered stretches follow at residues 506–526 (LETN…EGQA) and 570–590 (DHPS…VSGS). The segment at 707-729 (NCSNCKRPMSNKGWICDRCHQCA) adopts a C4-type zinc-finger fold. Zn(2+)-binding residues include Cys708, Cys711, Cys722, Cys725, Cys732, Cys735, Cys746, Cys749, His751, His754, His757, Cys768, Cys772, His774, and Cys776. The RING-type; atypical zinc-finger motif lies at 730 to 779 (SVCAVCHHVVKGLFVWCQGCSHGGHLEHVMEWLKQSKHCPAGCGHLCEYT).

It belongs to the WD repeat WDR24 family. Component of the GATOR2 subcomplex, composed of MIOS, SEC13, SEH1L, WDR24 and WDR59. The GATOR2 complex interacts with CASTOR1 and CASTOR2; the interaction is negatively regulated by arginine. The GATOR2 complex interacts with SESN1, SESN2 and SESN3; the interaction is negatively regulated by amino acids.

The protein localises to the lysosome membrane. It carries out the reaction S-ubiquitinyl-[E2 ubiquitin-conjugating enzyme]-L-cysteine + [acceptor protein]-L-lysine = [E2 ubiquitin-conjugating enzyme]-L-cysteine + N(6)-ubiquitinyl-[acceptor protein]-L-lysine.. It functions in the pathway protein modification; protein ubiquitination. Its activity is regulated as follows. The GATOR2 complex is negatively regulated by the upstream amino acid sensors CASTOR1 and SESN2, which sequester the GATOR2 complex in absence of amino acids. In the presence of abundant amino acids, GATOR2 is released from CASTOR1 and SESN2 and activated. In terms of biological role, catalytic component of the GATOR2 complex, a multiprotein complex that acts as an activator of the amino acid-sensing branch of the mTORC1 signaling pathway. The GATOR2 complex indirectly activates mTORC1 through the inhibition of the GATOR1 subcomplex. GATOR2 probably acts as an E3 ubiquitin-protein ligase toward GATOR1. In the presence of abundant amino acids, the GATOR2 complex mediates ubiquitination of the NPRL2 core component of the GATOR1 complex, leading to GATOR1 inactivation. In the absence of amino acids, GATOR2 is inhibited, activating the GATOR1 complex. In addition to its role in regulation of the mTORC1 complex, promotes the acidification of lysosomes and facilitates autophagic flux. Within the GATOR2 complex, WDR24 constitutes the catalytic subunit that mediates 'Lys-6'-linked ubiquitination of NPRL2. The sequence is that of GATOR2 complex protein WDR24 from Danio rerio (Zebrafish).